The sequence spans 124 residues: Sulfur globule protein CV2 (124 aa).

The first 22 residues, 1-22 (MKKLATAAAVAALLGASASASA), serve as a signal peptide directing secretion.

As to quaternary structure, the protein envelope of the sulfur globules is composed of the three different proteins CV1, CV2 and CV3.

In terms of biological role, structural protein of the sulfur globules, which are intracellular globules that serve for sulfur storage in purple sulfur bacteria. The protein is Sulfur globule protein CV2 (sgpB) of Allochromatium vinosum (strain ATCC 17899 / DSM 180 / NBRC 103801 / NCIMB 10441 / D) (Chromatium vinosum).